A 156-amino-acid polypeptide reads, in one-letter code: ATP synthase subunit b (156 aa).

Residues 7-27 (LIGQTVAFIIFVWFCMKFVWP) form a helical membrane-spanning segment.

It belongs to the ATPase B chain family. F-type ATPases have 2 components, F(1) - the catalytic core - and F(0) - the membrane proton channel. F(1) has five subunits: alpha(3), beta(3), gamma(1), delta(1), epsilon(1). F(0) has three main subunits: a(1), b(2) and c(10-14). The alpha and beta chains form an alternating ring which encloses part of the gamma chain. F(1) is attached to F(0) by a central stalk formed by the gamma and epsilon chains, while a peripheral stalk is formed by the delta and b chains.

The protein localises to the cell inner membrane. In terms of biological role, f(1)F(0) ATP synthase produces ATP from ADP in the presence of a proton or sodium gradient. F-type ATPases consist of two structural domains, F(1) containing the extramembraneous catalytic core and F(0) containing the membrane proton channel, linked together by a central stalk and a peripheral stalk. During catalysis, ATP synthesis in the catalytic domain of F(1) is coupled via a rotary mechanism of the central stalk subunits to proton translocation. Component of the F(0) channel, it forms part of the peripheral stalk, linking F(1) to F(0). The chain is ATP synthase subunit b from Shewanella sp. (strain MR-4).